A 116-amino-acid chain; its full sequence is Proline-rich protein 9 (116 aa).

The polypeptide is Proline-rich protein 9 (PRR9) (Bos taurus (Bovine)).